Here is a 346-residue protein sequence, read N- to C-terminus: Leucine zipper protein 2 (346 aa).

The first 19 residues, 1–19, serve as a signal peptide directing secretion; sequence MKFSPAHYLLPLLPALVLS. Residues 16-211 adopt a coiled-coil conformation; it reads LVLSTRQDYE…QMKAMKETVQ (196 aa). N-linked (GlcNAc...) asparagine glycosylation is present at N133. Positions 164–192 are leucine-zipper; it reads LRYGKKDLLFKAQQLTDLEQKLAVAKNEL. The disordered stretch occupies residues 225 to 346; sequence ALSLITSNPT…GMAAREEKIL (122 aa). The span at 250-261 shows a compositional bias: low complexity; that stretch reads AAAKSKPQQSAS. Residues 262-283 show a composition bias toward polar residues; it reads GNNESSQVESTKEGSPSTTACD. The N-linked (GlcNAc...) asparagine glycan is linked to N264. Over residues 286–298 the composition is skewed to basic and acidic residues; the sequence is DEGRTCSIKHKES. The N-linked (GlcNAc...) asparagine glycan is linked to N302.

The protein localises to the secreted. In Pongo abelii (Sumatran orangutan), this protein is Leucine zipper protein 2 (LUZP2).